The chain runs to 248 residues: Cell division protein FtsQ (248 aa).

Residues 1–4 lie on the Cytoplasmic side of the membrane; sequence MGTR. A helical transmembrane segment spans residues 5 to 25; the sequence is LRALLGVLILLVLGGAGWLFL. The Periplasmic portion of the chain corresponds to 26-248; the sequence is RWEPTLLPIR…RVAARAGNRR (223 aa). The region spanning 32 to 101 is the POTRA domain; the sequence is LPIRLIQIEG…DTLRVQVREY (70 aa).

This sequence belongs to the FtsQ/DivIB family. FtsQ subfamily. In terms of assembly, part of a complex composed of FtsB, FtsL and FtsQ.

The protein localises to the cell inner membrane. Its function is as follows. Essential cell division protein. May link together the upstream cell division proteins, which are predominantly cytoplasmic, with the downstream cell division proteins, which are predominantly periplasmic. May control correct divisome assembly. This Allochromatium vinosum (strain ATCC 17899 / DSM 180 / NBRC 103801 / NCIMB 10441 / D) (Chromatium vinosum) protein is Cell division protein FtsQ.